The sequence spans 785 residues: uncharacterized protein (785 aa).

A DOD-type homing endonuclease domain is found at 293 to 421; the sequence is LVGYFLSEGY…LRLISLRLGF (129 aa).

In terms of processing, this protein undergoes a protein self splicing that involves a post-translational excision of the intervening region (intein) followed by peptide ligation.

This is an uncharacterized protein from Methanocaldococcus jannaschii (strain ATCC 43067 / DSM 2661 / JAL-1 / JCM 10045 / NBRC 100440) (Methanococcus jannaschii).